The primary structure comprises 364 residues: UDP-N-acetylglucosamine--N-acetylmuramyl-(pentapeptide) pyrophosphoryl-undecaprenol N-acetylglucosamine transferase (364 aa).

UDP-N-acetyl-alpha-D-glucosamine contacts are provided by residues Thr-15–Gly-17, Asn-123, Arg-164, Ser-191, and Gln-286.

It belongs to the glycosyltransferase 28 family. MurG subfamily.

It is found in the cell inner membrane. It catalyses the reaction di-trans,octa-cis-undecaprenyl diphospho-N-acetyl-alpha-D-muramoyl-L-alanyl-D-glutamyl-meso-2,6-diaminopimeloyl-D-alanyl-D-alanine + UDP-N-acetyl-alpha-D-glucosamine = di-trans,octa-cis-undecaprenyl diphospho-[N-acetyl-alpha-D-glucosaminyl-(1-&gt;4)]-N-acetyl-alpha-D-muramoyl-L-alanyl-D-glutamyl-meso-2,6-diaminopimeloyl-D-alanyl-D-alanine + UDP + H(+). It functions in the pathway cell wall biogenesis; peptidoglycan biosynthesis. Its function is as follows. Cell wall formation. Catalyzes the transfer of a GlcNAc subunit on undecaprenyl-pyrophosphoryl-MurNAc-pentapeptide (lipid intermediate I) to form undecaprenyl-pyrophosphoryl-MurNAc-(pentapeptide)GlcNAc (lipid intermediate II). This is UDP-N-acetylglucosamine--N-acetylmuramyl-(pentapeptide) pyrophosphoryl-undecaprenol N-acetylglucosamine transferase from Prochlorococcus marinus subsp. pastoris (strain CCMP1986 / NIES-2087 / MED4).